The sequence spans 218 residues: Thiopurine S-methyltransferase (218 aa).

Residues W10, L45, E66, and R123 each contribute to the S-adenosyl-L-methionine site.

Belongs to the class I-like SAM-binding methyltransferase superfamily. TPMT family.

Its subcellular location is the cytoplasm. The enzyme catalyses S-adenosyl-L-methionine + a thiopurine = S-adenosyl-L-homocysteine + a thiopurine S-methylether.. The sequence is that of Thiopurine S-methyltransferase from Shewanella sp. (strain W3-18-1).